The sequence spans 416 residues: Cytochrome P450 monooxygenase PikC (416 aa).

Substrate-binding positions include Glu94, 187 to 191 (AQTAM), and 238 to 246 (HILLVAGHE). Residue Cys354 participates in heme binding.

Belongs to the cytochrome P450 family. Requires heme as cofactor.

It catalyses the reaction narbomycin + 2 reduced [2Fe-2S]-[ferredoxin] + O2 + 2 H(+) = pikromycin + 2 oxidized [2Fe-2S]-[ferredoxin] + H2O. The catalysed reaction is narbomycin + 2 reduced [2Fe-2S]-[ferredoxin] + O2 + 2 H(+) = neopikromycin + 2 oxidized [2Fe-2S]-[ferredoxin] + H2O. It carries out the reaction narbomycin + 4 reduced [2Fe-2S]-[ferredoxin] + 2 O2 + 4 H(+) = novapikromycin + 4 oxidized [2Fe-2S]-[ferredoxin] + 2 H2O. The enzyme catalyses 10-deoxymethymycin + 2 reduced [2Fe-2S]-[ferredoxin] + O2 + 2 H(+) = methymycin + 2 oxidized [2Fe-2S]-[ferredoxin] + H2O. It catalyses the reaction 10-deoxymethymycin + 2 reduced [2Fe-2S]-[ferredoxin] + O2 + 2 H(+) = neomethymycin + 2 oxidized [2Fe-2S]-[ferredoxin] + H2O. The catalysed reaction is 10-deoxymethymycin + 4 reduced [2Fe-2S]-[ferredoxin] + 2 O2 + 4 H(+) = novamethymycin + 4 oxidized [2Fe-2S]-[ferredoxin] + 2 H2O. Its pathway is antibiotic biosynthesis. In terms of biological role, catalyzes the hydroxylation of narbomycin to give rise to pikromycin, and of 10-deoxymethymycin (YC-17) to give rise to methymycin and neomethymycin during macrolide antibiotic biosynthesis. In addition, produces low amounts of neopicromycin, novapikromycin and novamethymycin. Requires the participation of a ferredoxin and a ferredoxin reductase for the transfer of electrons from NADPH to the monooxygenase. This chain is Cytochrome P450 monooxygenase PikC, found in Streptomyces venezuelae.